Consider the following 248-residue polypeptide: Probable transcriptional regulatory protein PSPPH_3775 (248 aa).

This sequence belongs to the TACO1 family.

The protein localises to the cytoplasm. This chain is Probable transcriptional regulatory protein PSPPH_3775, found in Pseudomonas savastanoi pv. phaseolicola (strain 1448A / Race 6) (Pseudomonas syringae pv. phaseolicola (strain 1448A / Race 6)).